A 91-amino-acid polypeptide reads, in one-letter code: Small nuclear ribonucleoprotein F (91 aa).

A Sm domain is found at 8–81 (APKPFLYDLK…VLFVRGIDDE (74 aa)).

Belongs to the snRNP Sm proteins family. SmF/LSm6 subfamily. As to quaternary structure, core component of the spliceosomal U1, U2, U4 and U5 small nuclear ribonucleoproteins (snRNPs), the building blocks of the spliceosome. Most spliceosomal snRNPs contain a common set of Sm proteins, SNRPB, SNRPD1, SNRPD2, SNRPD3, SNRPE, SNRPF and SNRPG that assemble in a heptameric protein ring on the Sm site of the small nuclear RNA to form the core snRNP. Component of the U1 snRNP. Component of the U4/U6-U5 tri-snRNP complex. Component of the U7 snRNP complex. Component of the U11/U12 snRNPs that are part of the U12-type spliceosome. Part of the SMN-Sm complex that catalyzes core snRNPs assembly.

The protein localises to the cytoplasm. The protein resides in the cytosol. It is found in the nucleus. Its function is as follows. Plays a role in pre-mRNA splicing as a core component of the spliceosomal U1, U2, U4 and U5 small nuclear ribonucleoproteins (snRNPs), the building blocks of the spliceosome. Component of both the pre-catalytic spliceosome B complex and activated spliceosome C complexes. Is also a component of the minor U12 spliceosome. The sequence is that of Small nuclear ribonucleoprotein F (snrpf) from Dictyostelium discoideum (Social amoeba).